The following is a 153-amino-acid chain: 3-hydroxyacyl-[acyl-carrier-protein] dehydratase FabZ (153 aa).

Residue H57 is part of the active site.

Belongs to the thioester dehydratase family. FabZ subfamily.

It localises to the cytoplasm. It carries out the reaction a (3R)-hydroxyacyl-[ACP] = a (2E)-enoyl-[ACP] + H2O. Functionally, involved in unsaturated fatty acids biosynthesis. Catalyzes the dehydration of short chain beta-hydroxyacyl-ACPs and long chain saturated and unsaturated beta-hydroxyacyl-ACPs. This chain is 3-hydroxyacyl-[acyl-carrier-protein] dehydratase FabZ, found in Xanthomonas campestris pv. campestris (strain 8004).